Here is a 399-residue protein sequence, read N- to C-terminus: 4-hydroxy-3-methylbut-2-enyl diphosphate reductase (399 aa).

Cys-66 provides a ligand contact to [4Fe-4S] cluster. Residue His-96 participates in (2E)-4-hydroxy-3-methylbut-2-enyl diphosphate binding. His-96 provides a ligand contact to dimethylallyl diphosphate. His-96 serves as a coordination point for isopentenyl diphosphate. Residue Cys-157 participates in [4Fe-4S] cluster binding. Residue His-185 coordinates (2E)-4-hydroxy-3-methylbut-2-enyl diphosphate. Dimethylallyl diphosphate is bound at residue His-185. His-185 is an isopentenyl diphosphate binding site. Glu-187 acts as the Proton donor in catalysis. Thr-250 is a (2E)-4-hydroxy-3-methylbut-2-enyl diphosphate binding site. [4Fe-4S] cluster is bound at residue Cys-288. (2E)-4-hydroxy-3-methylbut-2-enyl diphosphate is bound by residues Ser-317, Ser-318, Asn-319, and Ser-379. Ser-317, Ser-318, Asn-319, and Ser-379 together coordinate dimethylallyl diphosphate. 4 residues coordinate isopentenyl diphosphate: Ser-317, Ser-318, Asn-319, and Ser-379.

Belongs to the IspH family. [4Fe-4S] cluster is required as a cofactor.

It carries out the reaction isopentenyl diphosphate + 2 oxidized [2Fe-2S]-[ferredoxin] + H2O = (2E)-4-hydroxy-3-methylbut-2-enyl diphosphate + 2 reduced [2Fe-2S]-[ferredoxin] + 2 H(+). The catalysed reaction is dimethylallyl diphosphate + 2 oxidized [2Fe-2S]-[ferredoxin] + H2O = (2E)-4-hydroxy-3-methylbut-2-enyl diphosphate + 2 reduced [2Fe-2S]-[ferredoxin] + 2 H(+). Its pathway is isoprenoid biosynthesis; dimethylallyl diphosphate biosynthesis; dimethylallyl diphosphate from (2E)-4-hydroxy-3-methylbutenyl diphosphate: step 1/1. It participates in isoprenoid biosynthesis; isopentenyl diphosphate biosynthesis via DXP pathway; isopentenyl diphosphate from 1-deoxy-D-xylulose 5-phosphate: step 6/6. In terms of biological role, catalyzes the conversion of 1-hydroxy-2-methyl-2-(E)-butenyl 4-diphosphate (HMBPP) into a mixture of isopentenyl diphosphate (IPP) and dimethylallyl diphosphate (DMAPP). Acts in the terminal step of the DOXP/MEP pathway for isoprenoid precursor biosynthesis. The chain is 4-hydroxy-3-methylbut-2-enyl diphosphate reductase from Synechococcus sp. (strain WH7803).